Reading from the N-terminus, the 68-residue chain is Protein SlyX homolog (68 aa).

It belongs to the SlyX family.

The chain is Protein SlyX homolog from Pseudomonas putida (strain ATCC 700007 / DSM 6899 / JCM 31910 / BCRC 17059 / LMG 24140 / F1).